Consider the following 140-residue polypeptide: Putative pre-16S rRNA nuclease (140 aa).

This sequence belongs to the YqgF nuclease family.

The protein resides in the cytoplasm. Functionally, could be a nuclease involved in processing of the 5'-end of pre-16S rRNA. This chain is Putative pre-16S rRNA nuclease, found in Lachnospira eligens (strain ATCC 27750 / DSM 3376 / VPI C15-48 / C15-B4) (Eubacterium eligens).